Here is a 771-residue protein sequence, read N- to C-terminus: Transducin-like enhancer protein 3-B (771 aa).

The tract at residues 1–141 (MYPQGRHPAP…PLTQQQLQAQ (141 aa)) is q domain. Positions 137–148 (QLQAQHLSHAAH) are enriched in low complexity. Disordered regions lie at residues 137–174 (QLQAQHLSHAAHGPPVQLPPHPSGLQPPGIPPVTGSGS) and 196–360 (HHDL…MEAL). Positions 142 to 209 (HLSHAAHGPP…EHRERESSTN (68 aa)) are GP domain. Positions 196–206 (HHDLEHRERES) are enriched in basic and acidic residues. A compositionally biased stretch (low complexity) spans 207 to 217 (STNNSVSPSDS). Residues 210–278 (NSVSPSDSLR…TPRVSPSHSP (69 aa)) are ccN domain. 2 stretches are compositionally biased toward basic and acidic residues: residues 219 to 257 (RASEKHRGSSEYSLDPKKRRVEEKDNMSRYDSDGDKSDD) and 282 to 293 (GLDKARALKKDA). The Nuclear localization signal signature appears at 235 to 238 (KKRR). An SP domain region spans residues 279-451 (PENGLDKARA…GGKPAYSFHV (173 aa)). Residues 294–309 (PNSPASVASSGSTPSS) are compositionally biased toward low complexity. Residues Ser-296 and Ser-299 each carry the phosphoserine modification. The span at 310-319 (KAKDHPHNDK) shows a compositional bias: basic and acidic residues. Positions 320-332 (SSTPGLKSNTPTP) are enriched in polar residues. 7 WD repeats span residues 483-521 (SHGEVVCAVTISNPTRHVYTGGKGCVKIWDISQPGSKSP), 529-568 (NRDNYIRSCKLLPDGRTLIVGGEASTLTIWDLASQTPRIK), 573-612 (SSAPACYALAISPDAKVCFSCCSDGNIAVWDLHNQTLVRQ), 615-654 (GHTDGASCIDISHDGTKLWTGGLDNTVRSWDLREGRQLQQ), 656-695 (DFTSQIFSLGYCPTGEWLAVGMESSNVEVLHHTKPDKYQL), 697-736 (LHESCVLSLKFAYCGKWFVSTGKDNLLNAWRTPYGASIFQ), and 738-771 (KESSSVLSCDISADDKYIVTGSGDKKATVYEVIY).

This sequence belongs to the WD repeat Groucho/TLE family. As to expression, at gastrulation, expression is absent within the axial mesoderm. After gastrulation is complete, expressed in the presomitic mesoderm, but expression in the tailbud doesn't begin until the six to seven somite stage, after which it becomes abundant. Expression is abundant throughout somitogenesis within the posterior half of the somites, but is absent from older somites. Also expressed in a dynamic manner within the neural plate.

It is found in the nucleus. Its function is as follows. Transcriptional corepressor that binds to a number of transcription factors. Inhibits the transcriptional activation mediated by CTNNB1 and TCF family members in Wnt signaling. The effects of full-length TLE family members may be modulated by association with dominant-negative AES. The polypeptide is Transducin-like enhancer protein 3-B (Danio rerio (Zebrafish)).